The chain runs to 492 residues: Glutamyl-tRNA(Gln) amidotransferase subunit A (492 aa).

Residues Lys79 and Ser154 each act as charge relay system in the active site. Ser178 serves as the catalytic Acyl-ester intermediate.

This sequence belongs to the amidase family. GatA subfamily. Heterotrimer of A, B and C subunits.

It catalyses the reaction L-glutamyl-tRNA(Gln) + L-glutamine + ATP + H2O = L-glutaminyl-tRNA(Gln) + L-glutamate + ADP + phosphate + H(+). Allows the formation of correctly charged Gln-tRNA(Gln) through the transamidation of misacylated Glu-tRNA(Gln) in organisms which lack glutaminyl-tRNA synthetase. The reaction takes place in the presence of glutamine and ATP through an activated gamma-phospho-Glu-tRNA(Gln). In Acinetobacter baumannii (strain ATCC 17978 / DSM 105126 / CIP 53.77 / LMG 1025 / NCDC KC755 / 5377), this protein is Glutamyl-tRNA(Gln) amidotransferase subunit A.